Here is a 397-residue protein sequence, read N- to C-terminus: MRGLAMRLPPRLALSVLAGRGPSCILGSGAATRKDWQERNRRSFSDLYTQPLPDCDFEESSSWTHKSRSEPTRHIACKKSARNLVRDLLEHQNPSHQLILECNPGPGILTGALLKAGARVVAFESEKMFIPHLESLRKNADGELQVVHCDFFKIDPRYQELVRPDVNSHTIFQNLGIKAVPWSAGVPIKVFGILPNKHERRLLWKILFDLYSCESIYRYGRVELNMFISEKEFRKLIATPKRPDLYQVLGVLWQVACEIKFLHMEPWSSFSVHAENGHLEKSKHSESLNLLKQNLYLVRMTPRRTLFTENLSPLNYDMFFHLVKHCFGKRNAPIIHHLRSLSTVDPINILRQIRKRPGDTAAKMYPHDFKRLFETIERSEDSVFKWIYDYCSDDSEL.

The transit peptide at 1 to 44 (MRGLAMRLPPRLALSVLAGRGPSCILGSGAATRKDWQERNRRSF) directs the protein to the mitochondrion. S-adenosyl-L-methionine-binding residues include Ile-75, Glu-124, and Asp-150. The tract at residues 329–330 (KR) is DNA-binding.

Belongs to the class I-like SAM-binding methyltransferase superfamily. rRNA adenine N(6)-methyltransferase family. KsgA subfamily. Homodimer. Component of the mitochondrial transcription initiation complex, composed at least of TFB2M, TFAM and POLRMT. In this complex TFAM recruits POLRMT to the promoter whereas TFB2M induces structural changes in POLRMT to enable promoter opening and trapping of the DNA non-template strand. Interacts with mitochondrial RNA polymerase POLRMT. Interacts with TFAM.

The protein resides in the mitochondrion. The enzyme catalyses adenosine in rRNA + S-adenosyl-L-methionine = N(6)-methyladenosine in rRNA + S-adenosyl-L-homocysteine + H(+). Functionally, S-adenosyl-L-methionine-dependent rRNA methyltransferase which may methylate two specific adjacent adenosines in the loop of a conserved hairpin near the 3'-end of 12S mitochondrial rRNA. Component of the mitochondrial transcription initiation complex, composed at least of TFB2M, TFAM and POLRMT that is required for basal transcription of mitochondrial DNA. In this complex TFAM recruits POLRMT to a specific promoter whereas TFB2M induces structural changes in POLRMT to enable promoter opening and trapping of the DNA non-template strand. Stimulates transcription independently of the methyltransferase activity. The chain is Dimethyladenosine transferase 2, mitochondrial from Rattus norvegicus (Rat).